The following is a 264-amino-acid chain: S-adenosylmethionine decarboxylase proenzyme (264 aa).

S112 (schiff-base intermediate with substrate; via pyruvic acid) is an active-site residue. S112 is modified (pyruvic acid (Ser); by autocatalysis). The active-site Proton acceptor; for processing activity is the H117. C140 acts as the Proton donor; for catalytic activity in catalysis.

The protein belongs to the prokaryotic AdoMetDC family. Type 2 subfamily. As to quaternary structure, heterooctamer of four alpha and four beta chains arranged as a tetramer of alpha/beta heterodimers. Pyruvate serves as cofactor. Post-translationally, is synthesized initially as an inactive proenzyme. Formation of the active enzyme involves a self-maturation process in which the active site pyruvoyl group is generated from an internal serine residue via an autocatalytic post-translational modification. Two non-identical subunits are generated from the proenzyme in this reaction, and the pyruvate is formed at the N-terminus of the alpha chain, which is derived from the carboxyl end of the proenzyme. The post-translation cleavage follows an unusual pathway, termed non-hydrolytic serinolysis, in which the side chain hydroxyl group of the serine supplies its oxygen atom to form the C-terminus of the beta chain, while the remainder of the serine residue undergoes an oxidative deamination to produce ammonia and the pyruvoyl group blocking the N-terminus of the alpha chain.

The enzyme catalyses S-adenosyl-L-methionine + H(+) = S-adenosyl 3-(methylsulfanyl)propylamine + CO2. It functions in the pathway amine and polyamine biosynthesis; S-adenosylmethioninamine biosynthesis; S-adenosylmethioninamine from S-adenosyl-L-methionine: step 1/1. In terms of biological role, catalyzes the decarboxylation of S-adenosylmethionine to S-adenosylmethioninamine (dcAdoMet), the propylamine donor required for the synthesis of the polyamines spermine and spermidine from the diamine putrescine. The sequence is that of S-adenosylmethionine decarboxylase proenzyme from Citrobacter koseri (strain ATCC BAA-895 / CDC 4225-83 / SGSC4696).